The chain runs to 204 residues: N-(5'-phosphoribosyl)anthranilate isomerase (204 aa).

The protein belongs to the TrpF family.

It catalyses the reaction N-(5-phospho-beta-D-ribosyl)anthranilate = 1-(2-carboxyphenylamino)-1-deoxy-D-ribulose 5-phosphate. Its pathway is amino-acid biosynthesis; L-tryptophan biosynthesis; L-tryptophan from chorismate: step 3/5. The polypeptide is N-(5'-phosphoribosyl)anthranilate isomerase (Bacillus cereus (strain AH820)).